Here is a 164-residue protein sequence, read N- to C-terminus: MASGSADHEDLRYRQCAGVMLANREGLVFAAQRIDSKNLGAWQMPQGGIDPGETQQEAAMRELEEETGVSADLADVIARMPYPVRYDLPEELQGKLWGGRYRGQEQHWFLARFTGTDADIDIAAHNPPEFSEWKWVEPDELPRLIVPFKREVYRAVVKEFRSLI.

The region spanning 12 to 158 is the Nudix hydrolase domain; sequence RYRQCAGVML…KREVYRAVVK (147 aa). The Nudix box motif lies at 47 to 68; that stretch reads GGIDPGETQQEAAMRELEEETG.

It belongs to the Nudix hydrolase family. RppH subfamily. A divalent metal cation is required as a cofactor.

Functionally, accelerates the degradation of transcripts by removing pyrophosphate from the 5'-end of triphosphorylated RNA, leading to a more labile monophosphorylated state that can stimulate subsequent ribonuclease cleavage. The protein is RNA pyrophosphohydrolase of Erythrobacter litoralis (strain HTCC2594).